The chain runs to 588 residues: Pescadillo homolog (588 aa).

The tract at residues 1-54 (MGGLEKKKYERGSATNYITRNKARKKLQLSLADFRRLCILKGIYPHEPKHKKKV) is required for 28S ribosomal RNA processing. The tract at residues 1 to 257 (MGGLEKKKYE…PKLEGQAQAE (257 aa)) is sufficient for nucleolar localization. Residue Lys-98 is modified to N6-acetyllysine. Residues 294–314 (EAEVDEFPTDGEMSAQEEDRR) form a disordered region. A sufficient for interaction with MAP1B region spans residues 306-415 (MSAQEEDRRK…LLLPVAEYFS (110 aa)). In terms of domain architecture, BRCT spans 322–415 (KHKKLFEGLK…LLLPVAEYFS (94 aa)). The interval 448–515 (GEDPGNLNES…GKKPRVMAGT (68 aa)) is disordered. Positions 456–486 (ESEEEEEEDDNNEGDGDEEGENEEEEEDAEA) are enriched in acidic residues. Residues 487–508 (GSEKEEEARLAALEEQRMEGKK) are compositionally biased toward basic and acidic residues. Lys-517 participates in a covalent cross-link: Glycyl lysine isopeptide (Lys-Gly) (interchain with G-Cter in SUMO1); alternate. Lys-517 participates in a covalent cross-link: Glycyl lysine isopeptide (Lys-Gly) (interchain with G-Cter in SUMO2); alternate. Residues 539–588 (MMKKREKYLYQKIMFGKRRKIREANKLAEKRKAHDEAVRSEKKAKKARPE) form a required for 28S ribosomal RNA processing region. The tract at residues 565 to 588 (LAEKRKAHDEAVRSEKKAKKARPE) is disordered.

This sequence belongs to the pescadillo family. In terms of assembly, component of the PeBoW complex, composed of BOP1, PES1 and WDR12. The complex is held together by BOP1, which interacts with PES1 via its N-terminal domain and with WDR12 via a high-affinity interaction between the seven-bladed beta-propeller domains of the 2 proteins. The PeBoW complex associates with the 66S pre-ribosome. The PeBoW complex also associates with DDX27, PES1 interacts directly with DDX27. Interacts with IRS1 and UBTF. May interact with MAP1B. Sumoylated. Significant levels are detected in a variety of cancer cell lines, including glioblastoma, breast carcinoma, colon carcinoma and cervical carcinoma cells. Levels are abnormally elevated in malignant tumors of astrocytic origin.

It is found in the nucleus. The protein resides in the nucleolus. Its subcellular location is the nucleoplasm. The protein localises to the chromosome. Its function is as follows. Component of the PeBoW complex, which is required for maturation of 28S and 5.8S ribosomal RNAs and formation of the 60S ribosome. In Homo sapiens (Human), this protein is Pescadillo homolog.